Consider the following 494-residue polypeptide: Nicotianamine aminotransferase 1 (494 aa).

2 stretches are compositionally biased toward low complexity: residues 24–38 and 48–62; these read SGTS…TSSS and STAM…AASS. The tract at residues 24–76 is disordered; sequence SGTSYPTRTTTTSSSAPEFTNKKQSTAMAPTTAAAAASSNGGGESDGSSKEWR. Lysine 322 is modified (N6-(pyridoxal phosphate)lysine).

It belongs to the class-I pyridoxal-phosphate-dependent aminotransferase family. The cofactor is pyridoxal 5'-phosphate. Expressed in companion and pericycle cells adjacent to the protoxylem of roots. Expressed in companion cells of shoots.

It carries out the reaction nicotianamine + 2-oxoglutarate = 3''-deamino-3''-oxonicotianamine + L-glutamate. Its function is as follows. Involved in biosynthesis of mugineic acid family phytosiderophores, which are ferric iron chelators produced in graminaceous plants in response to iron deficiency. The chain is Nicotianamine aminotransferase 1 from Oryza sativa subsp. japonica (Rice).